A 681-amino-acid chain; its full sequence is Envelope glycoprotein (681 aa).

An N-terminal signal peptide occupies residues methionine 1–threonine 18. Over leucine 19–aspartate 648 the chain is Extracellular. The segment at serine 38 to histidine 188 is receptor-binding. Residues asparagine 94, asparagine 171, asparagine 190, asparagine 202, asparagine 207, asparagine 219, asparagine 223, and asparagine 255 are each glycosylated (N-linked (GlcNAc...) asparagine; by host). A disordered region spans residues asparagine 223–phenylalanine 351. Low complexity predominate over residues proline 244–proline 259. Positions glutamate 277–proline 455 are mucin-like region. 2 stretches are compositionally biased toward polar residues: residues proline 278–leucine 290 and glutamate 308–isoleucine 341. Asparagine 310, asparagine 323, asparagine 326, asparagine 337, asparagine 344, asparagine 345, asparagine 350, asparagine 360, asparagine 389, asparagine 397, asparagine 408, and asparagine 487 each carry an N-linked (GlcNAc...) asparagine; by host glycan. Residues serine 342 to phenylalanine 351 are compositionally biased toward low complexity. Residues threonine 366–leucine 414 show a composition bias toward polar residues. Residues threonine 366–threonine 425 form a disordered region. A fusion peptide region spans residues glycine 529–isoleucine 549. N-linked (GlcNAc...) asparagine; by host glycans are attached at residues asparagine 564 and asparagine 619. Residues tryptophan 649–leucine 669 traverse the membrane as a helical segment. Topologically, residues serine 670–glycine 681 are cytoplasmic. S-palmitoyl cysteine; by host attachment occurs at residues cysteine 671 and cysteine 673.

The protein belongs to the filoviruses glycoprotein family. As to quaternary structure, homotrimer; each monomer consists of a GP1 and a GP2 subunit linked by disulfide bonds. The resulting peplomers (GP1,2) protrude from the virus surface as spikes. GP1,2 interacts with human CD209 and CLEC4M (collectively referred to as DC-SIGN(R)). Asialoglycoprotein receptor (ASGP-R) may be a liver-specific receptor for GP1,2. Members of the Tyro3 receptor tyrosine kinase family may be cell entry factors interacting with GP1,2. Post-translationally, N-glycosylated. In terms of processing, O-glycosylated in the mucin-like region. Specific enzymatic cleavages in vivo yield mature proteins. The precursor is processed into GP1 and GP2 by host cell furin in the trans Golgi, and maybe by other host proteases, to yield the mature GP1 and GP2 proteins. The cleavage site corresponds to the furin optimal cleavage sequence [KR]-X-[KR]-R. Post-translationally, GP1 is phosphorylated on serine residues between residues 260 and 273.

The protein localises to the virion membrane. It is found in the host cell membrane. Functionally, GP1 is responsible for binding to the receptor(s) on target cells. Interacts with CD209/DC-SIGN and CLEC4M/DC-SIGNR which act as cofactors for virus entry into the host cell. Binding to CD209 and CLEC4M, which are respectively found on dendritic cells (DCs), and on endothelial cells of liver sinusoids and lymph node sinuses, facilitate infection of macrophages and endothelial cells. These interactions not only facilitate virus cell entry, but also allow capture of viral particles by DCs and subsequent transmission to susceptible cells without DCs infection (trans infection). In terms of biological role, GP2 acts as a class I viral fusion protein. Under the current model, the protein has at least 3 conformational states: pre-fusion native state, pre-hairpin intermediate state, and post-fusion hairpin state. During viral and target cell membrane fusion, the coiled coil regions (heptad repeats) assume a trimer-of-hairpins structure, positioning the fusion peptide in close proximity to the C-terminal region of the ectodomain. The formation of this structure appears to drive apposition and subsequent fusion of viral and target cell membranes. Responsible for penetration of the virus into the cell cytoplasm by mediating the fusion of the membrane of the endocytosed virus particle with the endosomal membrane. Low pH in endosomes induces an irreversible conformational change in GP2, releasing the fusion hydrophobic peptide. The chain is Envelope glycoprotein (GP) from Lake Victoria marburgvirus (strain Popp-67) (MARV).